Consider the following 129-residue polypeptide: Large-conductance mechanosensitive channel (129 aa).

3 helical membrane-spanning segments follow: residues Phe-8–Thr-28, Ile-30–Val-50, and Gly-67–Ile-87.

It belongs to the MscL family. As to quaternary structure, homopentamer.

It is found in the cell membrane. In terms of biological role, channel that opens in response to stretch forces in the membrane lipid bilayer. May participate in the regulation of osmotic pressure changes within the cell. The sequence is that of Large-conductance mechanosensitive channel from Oenococcus oeni (strain ATCC BAA-331 / PSU-1).